Reading from the N-terminus, the 444-residue chain is 4-O-dimethylallyl-L-tyrosine synthase (444 aa).

The protein belongs to the tryptophan dimethylallyltransferase family. As to quaternary structure, homodimer.

It carries out the reaction L-tyrosine + dimethylallyl diphosphate = 4-O-dimethylallyl-L-tyrosine + diphosphate. In terms of biological role, 4-O-dimethylallyl-L-tyrosine synthase; part of the gene cluster that mediates the biosynthesis of an unusual class of epipolythiodioxopiperazines (ETPs) lacking the reactive thiol group important for toxicity. Firstly, L-tyrosine is prenylated by tcpD, before undergoing condensation with L-glycine in a reaction catalyzed by the NRPS tcpP leading to the diketopiperazine (DKP) backbone. Afterwards the alpha-carbon of tyrosine is oxidized by the cytochrome P450 tcpC to form a hydroxyl group. However, in contrast other ETP biosynthesis pathways studied so far, tcpC is not able to bishydroxylate the DKP at both alpha-carbon positions, but hydroxylates the alpha-carbon of the tyrosine part and the nitrogen of the glycine part. The next steps involve an alpha,beta-elimination reaction catalyzed by tcpI, a methylation by the methyltransferase tcpN the action of the four enzyme cascade tcpG/K/J/I. Due to a dysfunctional cytochrome P450 monooxygenase tcpC, the pathway leads to the biosynthesis of probable non-toxic metabolites lacking the reactive thiol group. The polypeptide is 4-O-dimethylallyl-L-tyrosine synthase (Claviceps purpurea (strain 20.1) (Ergot fungus)).